Consider the following 631-residue polypeptide: Phosphomethylpyrimidine synthase (631 aa).

Residues asparagine 239, methionine 268, tyrosine 297, histidine 333, 353-355, 394-397, and glutamate 433 contribute to the substrate site; these read SRG and DGLR. Histidine 437 is a Zn(2+) binding site. Tyrosine 460 contributes to the substrate binding site. Histidine 501 contributes to the Zn(2+) binding site. [4Fe-4S] cluster is bound by residues cysteine 581, cysteine 584, and cysteine 589.

Belongs to the ThiC family. Homodimer. The cofactor is [4Fe-4S] cluster.

It carries out the reaction 5-amino-1-(5-phospho-beta-D-ribosyl)imidazole + S-adenosyl-L-methionine = 4-amino-2-methyl-5-(phosphooxymethyl)pyrimidine + CO + 5'-deoxyadenosine + formate + L-methionine + 3 H(+). It functions in the pathway cofactor biosynthesis; thiamine diphosphate biosynthesis. Functionally, catalyzes the synthesis of the hydroxymethylpyrimidine phosphate (HMP-P) moiety of thiamine from aminoimidazole ribotide (AIR) in a radical S-adenosyl-L-methionine (SAM)-dependent reaction. The polypeptide is Phosphomethylpyrimidine synthase (Salmonella dublin (strain CT_02021853)).